Here is a 135-residue protein sequence, read N- to C-terminus: MDPVQIRSLSLEALAYLGDAVWELHVRTRVLLPPRRLQWLHGDTVACVRASAQAKLATCLSPHLTVEEADWLRRGRNAGGTVPRRLDPATYRLATAFEALLGYLFLADRDRLGVILHLCDEFQHHHGPDTPSPEA.

Asp19 is an active-site residue.

It belongs to the MrnC RNase family. As to quaternary structure, homodimer. Mg(2+) serves as cofactor.

It localises to the cytoplasm. Involved in correct processing of both the 5' and 3' ends of 23S rRNA precursor. Processes 30S rRNA precursor transcript even in absence of ribonuclease 3 (Rnc); Rnc processes 30S rRNA into smaller rRNA precursors. This is Mini-ribonuclease 3 from Gloeobacter violaceus (strain ATCC 29082 / PCC 7421).